The primary structure comprises 381 residues: Cytochrome b (381 aa).

Helical transmembrane passes span 34 to 54 (FGSL…FLAM), 78 to 99 (WLIR…YIHI), 114 to 134 (WNIG…GYVL), and 179 to 199 (FFAF…IHVL). Heme b contacts are provided by H84 and H98. Residues H183 and H197 each coordinate heme b. A ubiquinone is bound at residue H202. The next 4 membrane-spanning stretches (helical) occupy residues 227-247 (YKDA…ALFL), 289-309 (LGGV…PLLH), 321-341 (LTQV…WIGG), and 348-368 (FILI…IAMP).

The protein belongs to the cytochrome b family. As to quaternary structure, the cytochrome bc1 complex contains 3 respiratory subunits (MT-CYB, CYC1 and UQCRFS1), 2 core proteins (UQCRC1 and UQCRC2) and probably 6 low-molecular weight proteins. The cofactor is heme b.

The protein localises to the mitochondrion inner membrane. In terms of biological role, component of the ubiquinol-cytochrome c reductase complex (complex III or cytochrome b-c1 complex) that is part of the mitochondrial respiratory chain. The b-c1 complex mediates electron transfer from ubiquinol to cytochrome c. Contributes to the generation of a proton gradient across the mitochondrial membrane that is then used for ATP synthesis. The chain is Cytochrome b (mt-cyb) from Isurus paucus (Longfin mako shark).